Consider the following 552-residue polypeptide: Serine/threonine-protein kinase RIO2 (552 aa).

One can recognise a Protein kinase domain in the interval 97–272 (VGNQMGVGKE…DRDVKCIKDF (176 aa)). Residue K123 coordinates ATP. Residue D228 is the Proton acceptor of the active site. 9 positions are modified to phosphoserine: S332, S335, S337, S350, S362, S380, S382, S385, and S390. Residues 399 to 408 (ALEEIKGQVV) carry the Nuclear export signal motif. Phosphoserine occurs at positions 412, 417, and 442. Y445 bears the Phosphotyrosine mark. Position 548 is a phosphoserine (S548).

It belongs to the protein kinase superfamily. RIO-type Ser/Thr kinase family. Associated with late 40S pre-ribosomal particles. Interacts with PLK1 (via its N-terminus). It depends on Mg(2+) as a cofactor. In terms of processing, autophosphorylated (in vitro). Phosphorylation at Ser-335, Ser-380, Ser-548 by PLK1 affects the timing of the metaphase-anaphase transition.

The protein localises to the cytoplasm. The catalysed reaction is L-seryl-[protein] + ATP = O-phospho-L-seryl-[protein] + ADP + H(+). The enzyme catalyses L-threonyl-[protein] + ATP = O-phospho-L-threonyl-[protein] + ADP + H(+). In terms of biological role, serine/threonine-protein kinase involved in the final steps of cytoplasmic maturation of the 40S ribosomal subunit. Involved in export of the 40S pre-ribosome particles (pre-40S) from the nucleus to the cytoplasm. Its kinase activity is required for the release of NOB1, PNO1 and LTV1 from the late pre-40S and the processing of 18S-E pre-rRNA to the mature 18S rRNA. Regulates the timing of the metaphase-anaphase transition during mitotic progression, and its phosphorylation, most likely by PLK1, regulates this function. The chain is Serine/threonine-protein kinase RIO2 from Homo sapiens (Human).